A 718-amino-acid chain; its full sequence is Ophiobolin F synthase oblA (718 aa).

The tract at residues 1–320 (MACKYSTLID…RYNGPTKFNE (320 aa)) is (7Z)-ophiobola-7,19-dien-3-ol synthase. Asp93 and Asp97 together coordinate Mg(2+). Residue Asp93 participates in substrate binding. The short motif at 93–97 (DDVID) is the DDXXD 1 element. Substrate-binding positions include 180–183 (RALD), Asn224, 228–232 (SFEKE), and 311–312 (RY). The NSE/DTE signature appears at 224–232 (NDLFSFEKE). Positions 321 to 718 (LQLLRSEHGL…LRVMLELLKV (398 aa)) are geranylfarnesyl diphosphate synthase. The interval 346–391 (LVEGDCHESKPNELKRKRNGVSVDDEMRTNGTNGAKKPAHVSQPST) is disordered. Basic and acidic residues predominate over residues 349-359 (GDCHESKPNEL). 3 residues coordinate isopentenyl diphosphate: Lys429, Arg432, and His461. Mg(2+) is bound by residues Asp468 and Asp472. The short motif at 468 to 472 (DDLED) is the DDXXD 2 element. Arg477 serves as a coordination point for dimethylallyl diphosphate. Arg478 lines the isopentenyl diphosphate pocket. Dimethylallyl diphosphate contacts are provided by Lys555, Thr556, Gln594, Asn601, Lys611, and Lys621.

This sequence in the N-terminal section; belongs to the terpene synthase family. It in the C-terminal section; belongs to the FPP/GGPP synthase family. Requires Mg(2+) as cofactor.

The catalysed reaction is isopentenyl diphosphate + (2E,6E)-farnesyl diphosphate = (2E,6E,10E)-geranylgeranyl diphosphate + diphosphate. The enzyme catalyses isopentenyl diphosphate + (2E,6E,10E)-geranylgeranyl diphosphate = (2E,6E,10E,14E)-geranylfarnesyl diphosphate + diphosphate. It catalyses the reaction (2E,6E,10E,14E)-geranylfarnesyl diphosphate + H2O = ophiobolin F + diphosphate. It participates in secondary metabolite biosynthesis; terpenoid biosynthesis. Its function is as follows. Bifunctional sesterterpene synthase; part of the gene cluster that mediates the biosynthesis of the sesterterpenes ophiobolins, fungal phytotoxins with potential anti-cancer activities. The first step of the pathway is performed by the sesterterpene synthase oblA that possesses both prenyl transferase and terpene cyclase activity, converting isopentenyl diphosphate and dimethylallyl diphosphate into geranylfarnesyl diphosphate (GFPP) and further converting GFPP into ophiobolin F, respectively. Other sesterterpenoids (C(25) terpenoids) are found as minor products of oblA. It is expected that ophiobolin F is then oxidized to ophiobolin A via ophiobolin C and ophiobolin B intermediates by the combined action of the cytochrome P450 monooxygenase oblB and the FAD-dependent oxidoreductase oblC. Although oblB catalyzes multistep oxygenations at C5 and C21/C7 in a relatively efficient manner, it is unable to convert ophiobolin F to ophiobolin C and produces instead several unexpected derivatives. This is Ophiobolin F synthase oblA from Aspergillus clavatus (strain ATCC 1007 / CBS 513.65 / DSM 816 / NCTC 3887 / NRRL 1 / QM 1276 / 107).